Reading from the N-terminus, the 208-residue chain is Small ribosomal subunit protein eS1 (208 aa).

Belongs to the eukaryotic ribosomal protein eS1 family.

The protein is Small ribosomal subunit protein eS1 of Saccharolobus solfataricus (strain ATCC 35092 / DSM 1617 / JCM 11322 / P2) (Sulfolobus solfataricus).